We begin with the raw amino-acid sequence, 300 residues long: Bifunctional protein FolD (300 aa).

Residues 168–170 (GRS), Ser193, and Ile234 each bind NADP(+).

Belongs to the tetrahydrofolate dehydrogenase/cyclohydrolase family. Homodimer.

The enzyme catalyses (6R)-5,10-methylene-5,6,7,8-tetrahydrofolate + NADP(+) = (6R)-5,10-methenyltetrahydrofolate + NADPH. It catalyses the reaction (6R)-5,10-methenyltetrahydrofolate + H2O = (6R)-10-formyltetrahydrofolate + H(+). Its pathway is one-carbon metabolism; tetrahydrofolate interconversion. Catalyzes the oxidation of 5,10-methylenetetrahydrofolate to 5,10-methenyltetrahydrofolate and then the hydrolysis of 5,10-methenyltetrahydrofolate to 10-formyltetrahydrofolate. The sequence is that of Bifunctional protein FolD from Ehrlichia ruminantium (strain Gardel).